We begin with the raw amino-acid sequence, 438 residues long: Probable tRNA pseudouridine synthase D (438 aa).

The active-site Nucleophile is the Asp-86. One can recognise a TRUD domain in the interval 165 to 390 (GVPNFFGIQR…SKGTRREVLL (226 aa)).

It belongs to the pseudouridine synthase TruD family.

The catalysed reaction is uridine(13) in tRNA = pseudouridine(13) in tRNA. In terms of biological role, could be responsible for synthesis of pseudouridine from uracil-13 in transfer RNAs. This Methanosarcina mazei (strain ATCC BAA-159 / DSM 3647 / Goe1 / Go1 / JCM 11833 / OCM 88) (Methanosarcina frisia) protein is Probable tRNA pseudouridine synthase D.